Consider the following 108-residue polypeptide: Tetrahydromethanopterin S-methyltransferase subunit B (108 aa).

The helical transmembrane segment at 81–101 (FFGFWISLSILTLGLILVIGL) threads the bilayer.

It belongs to the MtrB family. The complex is composed of 8 subunits; MtrA, MtrB, MtrC, MtrD, MtrE, MtrF, MtrG and MtrH.

It is found in the cell membrane. It carries out the reaction 5-methyl-5,6,7,8-tetrahydromethanopterin + coenzyme M + 2 Na(+)(in) = 5,6,7,8-tetrahydromethanopterin + methyl-coenzyme M + 2 Na(+)(out). Its pathway is one-carbon metabolism; methanogenesis from CO(2); methyl-coenzyme M from 5,10-methylene-5,6,7,8-tetrahydromethanopterin: step 2/2. Its function is as follows. Part of a complex that catalyzes the formation of methyl-coenzyme M and tetrahydromethanopterin from coenzyme M and methyl-tetrahydromethanopterin. This is an energy-conserving, sodium-ion translocating step. This chain is Tetrahydromethanopterin S-methyltransferase subunit B, found in Methanococcus aeolicus (strain ATCC BAA-1280 / DSM 17508 / OCM 812 / Nankai-3).